A 343-amino-acid chain; its full sequence is UBP1-associated proteins 1A (343 aa).

The interval 1 to 61 (MAKTLDKSKK…SESDNEFDPE (61 aa)) is disordered. A compositionally biased stretch (low complexity) spans 28–49 (NKQQQQPESSTPYSSSSSSSDS). Positions 50–61 (SDSESDNEFDPE) are enriched in acidic residues. Residues 104–181 (RKIFVYGLPW…RTATCQLASM (78 aa)) enclose the RRM domain. The disordered stretch occupies residues 312–343 (STYPDSDAGGKRGTGKDSDAGGSSFHGYSNYS). The span at 319-330 (AGGKRGTGKDSD) shows a compositional bias: basic and acidic residues.

As to quaternary structure, interacts with UBA1A, UBA2A, UBP1A, UBP1B and UBP1C.

It is found in the nucleus. Its function is as follows. Acts as a component of a complex regulating the turnover of mRNAs in the nucleus. Binds with high affinity to RNA molecules that contain U-rich sequences in 3'-UTRs. May function in complex with UBP1 and contribute to the stabilization of mRNAs in the nucleus. However, unlike UBP1, UBA1A does not stimulate pre-mRNA splicing. In Arabidopsis thaliana (Mouse-ear cress), this protein is UBP1-associated proteins 1A (UBA1A).